The primary structure comprises 428 residues: GTPase Obg (428 aa).

One can recognise an Obg domain in the interval 1-158 (MFIDTAKIFV…RWVALELKLL (158 aa)). In terms of domain architecture, OBG-type G spans 159–331 (ADVGLLGFPN…VIKEAARMLK (173 aa)). GTP contacts are provided by residues 165–172 (GFPNVGKS), 190–194 (FTTLK), 212–215 (DVPG), 282–285 (NKCD), and 312–314 (SAA). Mg(2+) is bound by residues S172 and T192. An OCT domain is found at 345–428 (RFIPEDKKFT…LNDFEFEYLL (84 aa)).

This sequence belongs to the TRAFAC class OBG-HflX-like GTPase superfamily. OBG GTPase family. As to quaternary structure, monomer. The cofactor is Mg(2+).

The protein resides in the cytoplasm. An essential GTPase which binds GTP, GDP and possibly (p)ppGpp with moderate affinity, with high nucleotide exchange rates and a fairly low GTP hydrolysis rate. Plays a role in control of the cell cycle, stress response, ribosome biogenesis and in those bacteria that undergo differentiation, in morphogenesis control. This Clostridium perfringens (strain ATCC 13124 / DSM 756 / JCM 1290 / NCIMB 6125 / NCTC 8237 / Type A) protein is GTPase Obg.